We begin with the raw amino-acid sequence, 189 residues long: dCTP deaminase (189 aa).

Residues 112 to 117 (KSTYAR), 136 to 138 (TLE), Gln-157, Tyr-171, and Gln-181 each bind dCTP. The active-site Proton donor/acceptor is the Glu-138.

The protein belongs to the dCTP deaminase family. As to quaternary structure, homotrimer.

The enzyme catalyses dCTP + H2O + H(+) = dUTP + NH4(+). The protein operates within pyrimidine metabolism; dUMP biosynthesis; dUMP from dCTP (dUTP route): step 1/2. Its function is as follows. Catalyzes the deamination of dCTP to dUTP. This chain is dCTP deaminase, found in Xanthomonas euvesicatoria pv. vesicatoria (strain 85-10) (Xanthomonas campestris pv. vesicatoria).